Consider the following 377-residue polypeptide: MTDIKQILTDLIRFPSITPEDAGCQKYMIQFLEQLGFTCQQLNNGPVSNFFACYGKIGPLLVFAGHTDVVPVGEVSKWDTDPFSLEEKNGVLYGRGVADMKGSLACMLHMARRFIKTYPSFPGRLGFLITSGEEGDEFNLGTPYVMQKLEQQGIVIDYCIVGEPSSSLKAGDIIKIGRRGSLSAKIHLSGKQGHVAYPHLADNPIHRISPVLAELTSMQWDNGNAYFPPTSMQITYIHCGGHAGNIIPGELNLHLNFRYSTEQTDESLKTRVINAFTHHNLNPAIEWRLNGEPFLTNKGILLESCKQTVLEHIGTLPELSTSGGTSDGRFIAPYGVEVIELGLVNATIHQVNECTSLQDLNTLETMYFSICEKLLID.

His-66 provides a ligand contact to Zn(2+). Asp-68 is a catalytic residue. Asp-99 lines the Zn(2+) pocket. Glu-133 serves as the catalytic Proton acceptor. 3 residues coordinate Zn(2+): Glu-134, Glu-163, and His-349.

This sequence belongs to the peptidase M20A family. DapE subfamily. As to quaternary structure, homodimer. Zn(2+) is required as a cofactor. The cofactor is Co(2+).

It catalyses the reaction N-succinyl-(2S,6S)-2,6-diaminopimelate + H2O = (2S,6S)-2,6-diaminopimelate + succinate. It participates in amino-acid biosynthesis; L-lysine biosynthesis via DAP pathway; LL-2,6-diaminopimelate from (S)-tetrahydrodipicolinate (succinylase route): step 3/3. Functionally, catalyzes the hydrolysis of N-succinyl-L,L-diaminopimelic acid (SDAP), forming succinate and LL-2,6-diaminopimelate (DAP), an intermediate involved in the bacterial biosynthesis of lysine and meso-diaminopimelic acid, an essential component of bacterial cell walls. The sequence is that of Succinyl-diaminopimelate desuccinylase from Legionella pneumophila (strain Corby).